The following is a 254-amino-acid chain: Imidazole glycerol phosphate synthase subunit HisF (254 aa).

Residues Asp-11 and Asp-130 contribute to the active site.

The protein belongs to the HisA/HisF family. As to quaternary structure, heterodimer of HisH and HisF.

The protein localises to the cytoplasm. The enzyme catalyses 5-[(5-phospho-1-deoxy-D-ribulos-1-ylimino)methylamino]-1-(5-phospho-beta-D-ribosyl)imidazole-4-carboxamide + L-glutamine = D-erythro-1-(imidazol-4-yl)glycerol 3-phosphate + 5-amino-1-(5-phospho-beta-D-ribosyl)imidazole-4-carboxamide + L-glutamate + H(+). The protein operates within amino-acid biosynthesis; L-histidine biosynthesis; L-histidine from 5-phospho-alpha-D-ribose 1-diphosphate: step 5/9. Its function is as follows. IGPS catalyzes the conversion of PRFAR and glutamine to IGP, AICAR and glutamate. The HisF subunit catalyzes the cyclization activity that produces IGP and AICAR from PRFAR using the ammonia provided by the HisH subunit. The chain is Imidazole glycerol phosphate synthase subunit HisF from Laribacter hongkongensis (strain HLHK9).